The primary structure comprises 203 residues: Akirin-2 (203 aa).

Phosphoserine occurs at positions 18 and 21. The Nuclear localization signal motif lies at P22–C27. S57 is modified (phosphoserine). A disordered region spans residues P115–K137. Positions L119–P135 are enriched in low complexity. The SYVS motif motif lies at S200–S203.

Belongs to the akirin family. As to quaternary structure, homodimer. Interacts with IPO9; the interaction is direct. Associates with 20S and 26S proteasomes. Interacts with SMARCD1; promoting SWI/SNF complex recruitment. Interacts with NFKBIZ. Interacts with YWHAB. Polyubiquitinated. Polyubiquitination is dependent of UBR5 that extends pre-ubiquitinated AKIRIN2.

It localises to the nucleus. The protein localises to the cytoplasm. The protein resides in the membrane. Functionally, molecular adapter that acts as a bridge between a variety of multiprotein complexes, and which is involved in embryonic development, immunity, myogenesis and brain development. Plays a key role in nuclear protein degradation by promoting import of proteasomes into the nucleus: directly binds to fully assembled 20S proteasomes at one end and to nuclear import receptor IPO9 at the other end, bridging them together and mediating the import of pre-assembled proteasome complexes through the nuclear pore. Involved in innate immunity by regulating the production of interleukin-6 (IL6) downstream of Toll-like receptor (TLR): acts by bridging the NF-kappa-B inhibitor NFKBIZ and the SWI/SNF complex, leading to promote induction of IL6. Also involved in adaptive immunity by promoting B-cell activation. Involved in brain development: required for the survival and proliferation of cerebral cortical progenitor cells. Involved in myogenesis: required for skeletal muscle formation and skeletal development, possibly by regulating expression of muscle differentiation factors. This is Akirin-2 from Bos taurus (Bovine).